We begin with the raw amino-acid sequence, 466 residues long: tRNA modification GTPase MnmE (466 aa).

Residues R25, E82, and K127 each contribute to the (6S)-5-formyl-5,6,7,8-tetrahydrofolate site. The 166-residue stretch at 223-388 (GIKVVIAGQP…LRRQLLQIAG (166 aa)) folds into the TrmE-type G domain. K(+) is bound at residue N233. Residues 233–238 (NAGKSS), 252–258 (TPIAGTT), 277–280 (DTAG), 346–349 (NKAD), and 369–371 (SAR) each bind GTP. S237 serves as a coordination point for Mg(2+). K(+) contacts are provided by T252, I254, and T257. Position 258 (T258) interacts with Mg(2+). K466 serves as a coordination point for (6S)-5-formyl-5,6,7,8-tetrahydrofolate.

The protein belongs to the TRAFAC class TrmE-Era-EngA-EngB-Septin-like GTPase superfamily. TrmE GTPase family. Homodimer. Heterotetramer of two MnmE and two MnmG subunits. K(+) serves as cofactor.

The protein resides in the cytoplasm. In terms of biological role, exhibits a very high intrinsic GTPase hydrolysis rate. Involved in the addition of a carboxymethylaminomethyl (cmnm) group at the wobble position (U34) of certain tRNAs, forming tRNA-cmnm(5)s(2)U34. In Acidovorax sp. (strain JS42), this protein is tRNA modification GTPase MnmE.